The sequence spans 994 residues: MRVLVFPSVLHSGQIHSIDINKDNSKILTSGLDKEINVWNLQEFVQLTTEGKDTVKDDIENVKPLLRITAHEDLVNIVKWCPQNENVFVSGDIQGKVYMHDISKNTHELIFPFGWKEDGTSRVVDLAWSDDGRMLAWSSGDCKIHIYDTEKATYQELTSLSNLEKLTVQRSIAFDPTNHYLISMGDDTSIYLYQYQYEPTTRNYQFRLINRISKLINKTSMNVDYKRISWSPDGEYVSVPTASKNQTSLISLLSRSNGWNNILSLVGHNLDCEVVQYNPMIYNSSENNDNPKLFNVIATAGSDMTLVVWNTTKDKPIFILQEISKKPIVDLCWDKTGNSLFVASLDGHLSIVSFHPQELGNTVSEELWKELFEAGEASIKPFNEKPDQDITPSTKKSSHNVIDILDQKNSINVHEAKAKKPTEGIKDLSSISPEEENADTESPLKQDLQAHDKQVTNFVPEVIPAIIEDAPETQTEDILHSAMSTTRSTKSQVKNPKEKPTKVTPEKAKVTTKNGKKRIQPMLISSMNENSSNNSVKKSNTSESNGTSNLVSSGKVLMEFDKPSYSISDDLYKQNKRTKTQDENSNKKLKRELEPVKFIGSVVLNPSTTFARIRLSIPKIRLNFQLSSTVEDNSFILDVKNGLGNETKPSRITYFKKEKQIWCDFIPRFIQLVAEGSTFWAVSTADGQILTYSHTSGKKLLPPIILGSPLSFLESHGNFLMAVTSIGELYVWNIEQKKIHLQSPSSLSSLLDLSNKYQEDGLSKSDNITMCSITNNGIPLITLSNGAGYLFNKDLGTWQTISESWWAFGSHYWDSLGNDDGSKPQSYGLFCDSNDSSIVGLLEQKTNESILRKTRAGRGKYFNKISKNMLMKEGFENLENTISLSHLENRILCCELLGEFKDFHDFFIIYVKRICELGFKAKLFEVCDQLLGPSEPNSTATKDGEANWNSEICGIKKHDLLKEVILSCAKNRDCQRILIHFGKKIGVIDIDEFN.

7 WD repeats span residues 10-49, 70-110, 118-157, 164-203, 220-263, 276-319, and 323-364; these read LHSGQIHSIDINKDNSKILTSGLDKEINVWNLQEFVQLTT, AHED…HELI, DGTSRVVDLAWSDDGRMLAWSSGDCKIHIYDTEKATYQEL, EKLTVQRSIAFDPTNHYLISMGDDTSIYLYQYQYEPTTRN, SMNV…NNIL, QYNP…PIFI, and ISKK…NTVS. Disordered regions lie at residues 413-445 and 482-550; these read VHEAKAKKPTEGIKDLSSISPEEENADTESPLK and AMST…TSNL. Residues 414-426 are compositionally biased toward basic and acidic residues; that stretch reads HEAKAKKPTEGIK. Residues 482 to 492 are compositionally biased toward polar residues; that stretch reads AMSTTRSTKSQ. Residues 495–509 show a composition bias toward basic and acidic residues; it reads NPKEKPTKVTPEKAK. The span at 525–545 shows a compositional bias: low complexity; that stretch reads SSMNENSSNNSVKKSNTSESN.

This sequence belongs to the WD repeat HIR1 family.

It localises to the nucleus. Functionally, required for replication-independent chromatin assembly and for the periodic repression of histone gene transcription during the cell cycle. In Debaryomyces hansenii (strain ATCC 36239 / CBS 767 / BCRC 21394 / JCM 1990 / NBRC 0083 / IGC 2968) (Yeast), this protein is Protein HIR2 (HIR2).